We begin with the raw amino-acid sequence, 343 residues long: Heat-inducible transcription repressor HrcA (343 aa).

It belongs to the HrcA family.

Functionally, negative regulator of class I heat shock genes (grpE-dnaK-dnaJ and groELS operons). Prevents heat-shock induction of these operons. The polypeptide is Heat-inducible transcription repressor HrcA (Mycolicibacterium smegmatis (strain ATCC 700084 / mc(2)155) (Mycobacterium smegmatis)).